Reading from the N-terminus, the 127-residue chain is MKDPSRSSTSPSIISEDVIINGHSHEDDNPFAEYMWMENEEEFNRQIEEELWEEEFIERCFQEMLEEEEEHEWFIPARDLPQTMDQIQDQFNDLVISDSSSLEDLVVKSNLNPNAKEFVPGVKYLNI.

Residues 1-15 (MKDPSRSSTSPSIIS) are compositionally biased toward low complexity. The segment at 1 to 24 (MKDPSRSSTSPSIISEDVIINGHS) is disordered. The PABPC1-interacting motif-1 (PAM1) stretch occupies residues 22 to 75 (GHSHEDDNPFAEYMWMENEEEFNRQIEEELWEEEFIERCFQEMLEEEEEHEWFI). The PABPC1-interacting motif-2 (PAM2) stretch occupies residues 105-120 (LVVKSNLNPNAKEFVP).

The protein belongs to the PAIP2 family. In terms of processing, ubiquitinated, leading to its degradation by the proteasome.

Its subcellular location is the cytoplasm. Functionally, acts as a repressor in the regulation of translation initiation of poly(A)-containing mRNAs. Its inhibitory activity on translation is mediated via its action on PABPC1. Displaces the interaction of PABPC1 with poly(A) RNA and competes with PAIP1 for binding to PABPC1. Its association with PABPC1 results in disruption of the cytoplasmic poly(A) RNP structure organization. The chain is Polyadenylate-binding protein-interacting protein 2 (PAIP2) from Gallus gallus (Chicken).